Reading from the N-terminus, the 150-residue chain is Large ribosomal subunit protein bL9 (150 aa).

It belongs to the bacterial ribosomal protein bL9 family.

Functionally, binds to the 23S rRNA. This is Large ribosomal subunit protein bL9 from Thioalkalivibrio sulfidiphilus (strain HL-EbGR7).